The chain runs to 219 residues: 2-hydroxy-3-keto-5-methylthiopentenyl-1-phosphate phosphatase (219 aa).

This sequence belongs to the HAD-like hydrolase superfamily. MtnX family.

It carries out the reaction 2-hydroxy-5-methylsulfanyl-3-oxopent-1-enyl phosphate + H2O = 1,2-dihydroxy-5-(methylsulfanyl)pent-1-en-3-one + phosphate. It functions in the pathway amino-acid biosynthesis; L-methionine biosynthesis via salvage pathway; L-methionine from S-methyl-5-thio-alpha-D-ribose 1-phosphate: step 4/6. In terms of biological role, dephosphorylates 2-hydroxy-3-keto-5-methylthiopentenyl-1-phosphate (HK-MTPenyl-1-P) yielding 1,2-dihydroxy-3-keto-5-methylthiopentene (DHK-MTPene). The protein is 2-hydroxy-3-keto-5-methylthiopentenyl-1-phosphate phosphatase of Bacillus cereus (strain G9842).